The chain runs to 265 residues: Glutamate racemase (265 aa).

Substrate-binding positions include 7–8 (DS) and 39–40 (YG). The active-site Proton donor/acceptor is the Cys-70. 71–72 (NT) lines the substrate pocket. Residue Cys-177 is the Proton donor/acceptor of the active site.

It belongs to the aspartate/glutamate racemases family.

The catalysed reaction is L-glutamate = D-glutamate. It functions in the pathway cell wall biogenesis; peptidoglycan biosynthesis. Provides the (R)-glutamate required for cell wall biosynthesis. This Prochlorococcus marinus (strain NATL2A) protein is Glutamate racemase.